A 347-amino-acid chain; its full sequence is Trace amine-associated receptor 4 (347 aa).

Topologically, residues 1 to 37 (MNSPDLWYSPETQFCFAAANNSCPRKARPALVVCAMY) are extracellular. A glycan (N-linked (GlcNAc...) asparagine) is linked at asparagine 20. 2 cysteine pairs are disulfide-bonded: cysteine 23–cysteine 187 and cysteine 106–cysteine 191. A helical transmembrane segment spans residues 38–58 (LVMIGAIVMTMLGNMVVIISI). The Cytoplasmic segment spans residues 59–69 (AHFKQLHSPTN). Residues 70 to 90 (FLILSMATTDFLLSCVVMPFS) traverse the membrane as a helical segment. The Extracellular portion of the chain corresponds to 91–110 (MVRSIESCWYFGDLFCKVHS). A helical membrane pass occupies residues 111-129 (CCDIMLCTTSIFHLCFISV). Topologically, residues 130 to 149 (DRHYAVCDPLHYVTQITVGV) are cytoplasmic. A helical membrane pass occupies residues 150-170 (VGVFLLISWSVPILFAFGLVF). Residues 171 to 197 (SELNLIGAEDFVAAIDCTGLCVLIFNK) are Extracellular-facing. The interval 175-188 (LIGAEDFVAAIDCT) is extracellular Loop 2 (ECL2). Residues 198–218 (LWGVLASFIAFFLPGAIMVGI) traverse the membrane as a helical segment. The Cytoplasmic portion of the chain corresponds to 219–260 (YIHIFTVARKHARKIGPGPRTKRALSESKMKATSGKESKATK). Residues 261-281 (TLSIVMGVFVLCWLPFFVLTI) traverse the membrane as a helical segment. Residues 282–296 (TDPFIGFTTPEDLYN) are Extracellular-facing. The chain crosses the membrane as a helical span at residues 297–317 (VFLWLGYFNSTFNPIIYGMFY). At 318 to 347 (PWFRKALRMIVTGTIFRSDSSTSSLHPAHP) the chain is on the cytoplasmic side.

It belongs to the G-protein coupled receptor 1 family.

The protein resides in the cell membrane. Its function is as follows. Olfactory receptor specific for 2-phenylethylamine, a trace amine present at high concentration in the urine of carnivore species, playing a key role in fear and avoidance responses. 2-phenylethylamine acts as a kairomone in the chemical detection of carnivore odor and triggers fear in rats. This receptor is probably mediated by the G(s)-class of G-proteins which activate adenylate cyclase. The chain is Trace amine-associated receptor 4 from Rattus norvegicus (Rat).